The sequence spans 493 residues: Transcript termination protein OPG145 (493 aa).

The 157-residue stretch at 100–256 (MIESKRPLYI…NSIINIAKLS (157 aa)) folds into the Helicase ATP-binding domain. Position 113 to 120 (113 to 120 (LACGFGKT)) interacts with ATP. The DESH box signature appears at 206–209 (DESH). The Helicase C-terminal domain occupies 309–456 (ILDTLVEEFK…IISLSVDKLG (148 aa)).

Belongs to the helicase family. Poxviruses subfamily. In terms of assembly, interacts with OPG087. Might be part of a transcription complex composed at least of OPG087, OPG110, and OPG145.

The protein resides in the virion. Functionally, DNA helicase which seems to act as a postreplicative transcription termination factor. Involved in ATP-dependent release of nascent RNA. Forms a stable complex with single-stranded DNA, and to a lesser extent RNA. This chain is Transcript termination protein OPG145 (OPG145), found in Homo sapiens (Human).